Reading from the N-terminus, the 238-residue chain is Aspartate/glutamate leucyltransferase (238 aa).

The protein belongs to the R-transferase family. Bpt subfamily.

It is found in the cytoplasm. The catalysed reaction is N-terminal L-glutamyl-[protein] + L-leucyl-tRNA(Leu) = N-terminal L-leucyl-L-glutamyl-[protein] + tRNA(Leu) + H(+). It carries out the reaction N-terminal L-aspartyl-[protein] + L-leucyl-tRNA(Leu) = N-terminal L-leucyl-L-aspartyl-[protein] + tRNA(Leu) + H(+). In terms of biological role, functions in the N-end rule pathway of protein degradation where it conjugates Leu from its aminoacyl-tRNA to the N-termini of proteins containing an N-terminal aspartate or glutamate. The sequence is that of Aspartate/glutamate leucyltransferase from Shewanella oneidensis (strain ATCC 700550 / JCM 31522 / CIP 106686 / LMG 19005 / NCIMB 14063 / MR-1).